A 372-amino-acid chain; its full sequence is Glutamate 5-kinase (372 aa).

K14 lines the ATP pocket. The substrate site is built by S54, D141, and N153. 173–174 (TD) contributes to the ATP binding site. The region spanning 280-358 (RGRVVIDAGA…SEIESVLGHL (79 aa)) is the PUA domain.

This sequence belongs to the glutamate 5-kinase family.

It localises to the cytoplasm. The enzyme catalyses L-glutamate + ATP = L-glutamyl 5-phosphate + ADP. It participates in amino-acid biosynthesis; L-proline biosynthesis; L-glutamate 5-semialdehyde from L-glutamate: step 1/2. Its function is as follows. Catalyzes the transfer of a phosphate group to glutamate to form L-glutamate 5-phosphate. The chain is Glutamate 5-kinase from Cupriavidus pinatubonensis (strain JMP 134 / LMG 1197) (Cupriavidus necator (strain JMP 134)).